Here is a 497-residue protein sequence, read N- to C-terminus: Tyrosine-protein kinase SPK-1 (497 aa).

The segment at M1 to P25 is disordered. In terms of domain architecture, SH3 spans P33 to G94. Residues E100–M200 form the SH2 domain. The 263-residue stretch at I220–L482 folds into the Protein kinase domain. ATP contacts are provided by residues I226–V234 and K248. Residue D342 is the Proton acceptor of the active site.

The protein belongs to the protein kinase superfamily. Tyr protein kinase family.

It catalyses the reaction L-tyrosyl-[protein] + ATP = O-phospho-L-tyrosyl-[protein] + ADP + H(+). In Girardia tigrina (Planarian), this protein is Tyrosine-protein kinase SPK-1.